Here is a 486-residue protein sequence, read N- to C-terminus: Ribosomal RNA small subunit methyltransferase F (486 aa).

Residues 124–130 (ASAPGSK), E148, D175, and D193 each bind S-adenosyl-L-methionine. The active-site Nucleophile is C246.

Belongs to the class I-like SAM-binding methyltransferase superfamily. RsmB/NOP family.

It localises to the cytoplasm. The catalysed reaction is cytidine(1407) in 16S rRNA + S-adenosyl-L-methionine = 5-methylcytidine(1407) in 16S rRNA + S-adenosyl-L-homocysteine + H(+). In terms of biological role, specifically methylates the cytosine at position 1407 (m5C1407) of 16S rRNA. The polypeptide is Ribosomal RNA small subunit methyltransferase F (Shewanella baltica (strain OS223)).